A 242-amino-acid polypeptide reads, in one-letter code: MSEWLFDLGNSRFKYAPLHGNRAGQVQAWAHGAEAMDAAALAALPSGQIAHVASVAAPALTQRMIACLQERFTQVRIVRTAAECAGIRIAYADPSRFGVDRFLALLGARGDAPVLVAGVGTALTIDVLGADGLHHGGCIAASPTTMREALHARAVQLPASGGDYVELAIDTDDALTSGCDGAAVALIERSLQHAQRSLGAPVRLLVHGGGAPPLLPLLPGATFRAALVLDGLATWATAAASP.

Residue 7 to 14 (DLGNSRFK) coordinates ATP. Substrate contacts are provided by residues Tyr-91 and 98–101 (GVDR). Catalysis depends on Asp-100, which acts as the Proton acceptor. Thr-121 is a binding site for ATP. Residue Thr-171 participates in substrate binding.

It belongs to the type III pantothenate kinase family. In terms of assembly, homodimer. Requires NH4(+) as cofactor. It depends on K(+) as a cofactor.

The protein resides in the cytoplasm. It catalyses the reaction (R)-pantothenate + ATP = (R)-4'-phosphopantothenate + ADP + H(+). It participates in cofactor biosynthesis; coenzyme A biosynthesis; CoA from (R)-pantothenate: step 1/5. Its function is as follows. Catalyzes the phosphorylation of pantothenate (Pan), the first step in CoA biosynthesis. This is Type III pantothenate kinase from Xanthomonas oryzae pv. oryzae (strain MAFF 311018).